Reading from the N-terminus, the 154-residue chain is MGLSDGEWQMVLNIWGKVEGDLAGHGQEVLISLFKAHPETLEKFDKFKNLKSEEEMKSSEDLKKHGCTVLTALGTILKKKGQHAAEIQPLAQSHATKHKIPVKYLEFISEVIIQVLKKRYSGDFGADAQGAMSKALELFRNDIAAKYKELGFQG.

Residues 2–148 form the Globin domain; it reads GLSDGEWQMV…FRNDIAAKYK (147 aa). 2 positions are modified to phosphoserine: Ser4 and Ser32. His65 provides a ligand contact to nitrite. His65 contacts O2. Position 68 is a phosphothreonine (Thr68). Residue His94 coordinates heme b. Residues Ser121 and Ser133 each carry the phosphoserine modification.

The protein belongs to the globin family. In terms of assembly, monomeric.

The protein resides in the cytoplasm. It localises to the sarcoplasm. The catalysed reaction is Fe(III)-heme b-[protein] + nitric oxide + H2O = Fe(II)-heme b-[protein] + nitrite + 2 H(+). The enzyme catalyses H2O2 + AH2 = A + 2 H2O. Monomeric heme protein which primary function is to store oxygen and facilitate its diffusion within muscle tissues. Reversibly binds oxygen through a pentacoordinated heme iron and enables its timely and efficient release as needed during periods of heightened demand. Depending on the oxidative conditions of tissues and cells, and in addition to its ability to bind oxygen, it also has a nitrite reductase activity whereby it regulates the production of bioactive nitric oxide. Under stress conditions, like hypoxia and anoxia, it also protects cells against reactive oxygen species thanks to its pseudoperoxidase activity. This chain is Myoglobin, found in Rattus norvegicus (Rat).